A 279-amino-acid polypeptide reads, in one-letter code: Movement protein (279 aa).

It belongs to the cucumovirus movement protein family.

It is found in the host cell junction. The protein localises to the host plasmodesma. Functionally, transports viral genome to neighboring plant cells directly through plasmosdesmata, without any budding. The movement protein allows efficient cell to cell propagation, by bypassing the host cell wall barrier. Acts by forming a tubular structure at the host plasmodesmata, enlarging it enough to allow free passage of virion capsids. The sequence is that of Movement protein from Cucumber mosaic virus (strain Kin) (CMV).